Reading from the N-terminus, the 322-residue chain is AA9 family lytic polysaccharide monooxygenase A (322 aa).

Residues 1-15 (MKVLSLLAAASAASA) form the signal peptide. Residues His16 and His96 each contribute to the Cu(2+) site. Intrachain disulfides connect Cys54–Cys182 and Cys152–Cys237. His168 and Gln177 together coordinate O2. Thr228 and Thr236 each carry an O-linked (Man...) threonine glycan. A CBM1 domain is found at 286–322 (CTAAQWAQCGGMGFSGCTTCASPYTCKKMNDYYSQCS).

This sequence belongs to the polysaccharide monooxygenase AA9 family. Cu(2+) serves as cofactor.

The protein resides in the secreted. It carries out the reaction [(1-&gt;4)-beta-D-glucosyl]n+m + reduced acceptor + O2 = 4-dehydro-beta-D-glucosyl-[(1-&gt;4)-beta-D-glucosyl]n-1 + [(1-&gt;4)-beta-D-glucosyl]m + acceptor + H2O.. Lytic polysaccharide monooxygenase (LPMO) that depolymerizes crystalline and amorphous polysaccharides via the oxidation of scissile alpha- or beta-(1-4)-glycosidic bonds, yielding C4 oxidation products. Catalysis by LPMOs requires the reduction of the active-site copper from Cu(II) to Cu(I) by a reducing agent and H(2)O(2) or O(2) as a cosubstrate. Active on tamarind xyloglucan and konjac glucomannan. The protein is AA9 family lytic polysaccharide monooxygenase A (gh61-1) of Neurospora crassa (strain ATCC 24698 / 74-OR23-1A / CBS 708.71 / DSM 1257 / FGSC 987).